The following is a 300-amino-acid chain: MSYRELVVELAREHAEALSDALLDLGALSVSVEDADADTPDEQPLFGEPGLVPDRTAWQHSRVVALLSADHEPAVLLAAATNEIGLAETPQFVVREVEEQDWVRLTQSQFEPIPIGERIWVVPSWHDAPDPDALVLELDPGLAFGTGSHPTTRLCMEWLEQSVKPGQSVLDYGCGSGILAILAKKCGANPVIGIDIDPQAVESARQNSERNRAEVTYGLPDACPDGEFDIVVANILSNPLKLMASMLASKVKPGGRIALSGVLARQADEVAAVYARYVDISVWREHEGWVCLAGTRRESH.

Residues Thr-152, Gly-173, Asp-195, and Asn-234 each contribute to the S-adenosyl-L-methionine site.

It belongs to the methyltransferase superfamily. PrmA family.

The protein resides in the cytoplasm. The enzyme catalyses L-lysyl-[protein] + 3 S-adenosyl-L-methionine = N(6),N(6),N(6)-trimethyl-L-lysyl-[protein] + 3 S-adenosyl-L-homocysteine + 3 H(+). Methylates ribosomal protein L11. This Burkholderia cenocepacia (strain ATCC BAA-245 / DSM 16553 / LMG 16656 / NCTC 13227 / J2315 / CF5610) (Burkholderia cepacia (strain J2315)) protein is Ribosomal protein L11 methyltransferase.